The sequence spans 265 residues: 3-deoxy-manno-octulosonate cytidylyltransferase (265 aa).

The protein belongs to the KdsB family.

The protein resides in the cytoplasm. It carries out the reaction 3-deoxy-alpha-D-manno-oct-2-ulosonate + CTP = CMP-3-deoxy-beta-D-manno-octulosonate + diphosphate. The protein operates within nucleotide-sugar biosynthesis; CMP-3-deoxy-D-manno-octulosonate biosynthesis; CMP-3-deoxy-D-manno-octulosonate from 3-deoxy-D-manno-octulosonate and CTP: step 1/1. It functions in the pathway bacterial outer membrane biogenesis; lipopolysaccharide biosynthesis. Its function is as follows. Activates KDO (a required 8-carbon sugar) for incorporation into bacterial lipopolysaccharide in Gram-negative bacteria. The chain is 3-deoxy-manno-octulosonate cytidylyltransferase from Delftia acidovorans (strain DSM 14801 / SPH-1).